Here is a 603-residue protein sequence, read N- to C-terminus: Geraniol synthase, chloroplastic (603 aa).

Residues 1–50 (MALQMIAPFLSSFLPNPRHSLAAHGLTHQKCVSKHISCSTTTPTYSTTVP) constitute a chloroplast transit peptide. Arg301, Asp338, Asp342, Arg479, and Asp482 together coordinate (2E)-geranyl diphosphate. Mg(2+) contacts are provided by Asp338 and Asp342. The short motif at 338-342 (DDIYD) is the DDXXD motif element. Residues Asp482, Thr486, and Glu490 each coordinate Mg(2+).

This sequence belongs to the terpene synthase family. Tpsb subfamily. In terms of assembly, homodimer. Mg(2+) is required as a cofactor. Mn(2+) serves as cofactor. As to expression, expressed in the oil cells of the leaves.

The protein resides in the plastid. It is found in the chloroplast. The catalysed reaction is (2E)-geranyl diphosphate + H2O = (2E)-geraniol + diphosphate. Its pathway is secondary metabolite biosynthesis; terpenoid biosynthesis. Its function is as follows. Monoterpene synthase that catalyzes the formation of geraniol from geranyl diphosphate. This Cinnamomum tenuipile (Alseodaphne mollis) protein is Geraniol synthase, chloroplastic (GerS).